The primary structure comprises 120 residues: Large ribosomal subunit protein uL18 (120 aa).

The protein belongs to the universal ribosomal protein uL18 family. Part of the 50S ribosomal subunit; part of the 5S rRNA/L5/L18 subcomplex. In B.stearothermophilus only 2 proteins, L5 and L18 have been shown to be part of this subcomplex, unlike the case in E.coli and T.thermophilus where L25 (TL5) is also found. In terms of processing, the protein, when overexpressed in E.coli, contains a phosphoserine, which is required for the protein to bind to 5S rRNA. It has been suggested, based solely on amino acid conservation, that this occurs on Ser-57.

This is one of the proteins that bind and probably mediate the attachment of the 5S RNA into the large ribosomal subunit, where it forms part of the central protuberance. The polypeptide is Large ribosomal subunit protein uL18 (rplR) (Geobacillus stearothermophilus (Bacillus stearothermophilus)).